The primary structure comprises 195 residues: Large ribosomal subunit protein uL11m (195 aa).

It belongs to the universal ribosomal protein uL11 family. In terms of assembly, component of the mitochondrial ribosome large subunit (39S) which comprises a 16S rRNA and about 50 distinct proteins.

The protein resides in the mitochondrion. The chain is Large ribosomal subunit protein uL11m (mrpl-11) from Caenorhabditis elegans.